The following is a 333-amino-acid chain: Holliday junction branch migration complex subunit RuvB (333 aa).

Positions Met1–Tyr182 are large ATPase domain (RuvB-L). ATP is bound by residues Leu21, Arg22, Gly63, Lys66, Thr67, Thr68, Glu129–Phe131, Arg172, Tyr182, and Arg219. A Mg(2+)-binding site is contributed by Thr67. Residues Thr183–Gln253 are small ATPAse domain (RuvB-S). Residues Lys256 to Val333 form a head domain (RuvB-H) region. Residues Arg311 and Arg316 each contribute to the DNA site.

This sequence belongs to the RuvB family. In terms of assembly, homohexamer. Forms an RuvA(8)-RuvB(12)-Holliday junction (HJ) complex. HJ DNA is sandwiched between 2 RuvA tetramers; dsDNA enters through RuvA and exits via RuvB. An RuvB hexamer assembles on each DNA strand where it exits the tetramer. Each RuvB hexamer is contacted by two RuvA subunits (via domain III) on 2 adjacent RuvB subunits; this complex drives branch migration. In the full resolvosome a probable DNA-RuvA(4)-RuvB(12)-RuvC(2) complex forms which resolves the HJ.

The protein resides in the cytoplasm. The catalysed reaction is ATP + H2O = ADP + phosphate + H(+). The RuvA-RuvB-RuvC complex processes Holliday junction (HJ) DNA during genetic recombination and DNA repair, while the RuvA-RuvB complex plays an important role in the rescue of blocked DNA replication forks via replication fork reversal (RFR). RuvA specifically binds to HJ cruciform DNA, conferring on it an open structure. The RuvB hexamer acts as an ATP-dependent pump, pulling dsDNA into and through the RuvAB complex. RuvB forms 2 homohexamers on either side of HJ DNA bound by 1 or 2 RuvA tetramers; 4 subunits per hexamer contact DNA at a time. Coordinated motions by a converter formed by DNA-disengaged RuvB subunits stimulates ATP hydrolysis and nucleotide exchange. Immobilization of the converter enables RuvB to convert the ATP-contained energy into a lever motion, pulling 2 nucleotides of DNA out of the RuvA tetramer per ATP hydrolyzed, thus driving DNA branch migration. The RuvB motors rotate together with the DNA substrate, which together with the progressing nucleotide cycle form the mechanistic basis for DNA recombination by continuous HJ branch migration. Branch migration allows RuvC to scan DNA until it finds its consensus sequence, where it cleaves and resolves cruciform DNA. The chain is Holliday junction branch migration complex subunit RuvB from Bacillus mycoides (strain KBAB4) (Bacillus weihenstephanensis).